A 207-amino-acid chain; its full sequence is LexA repressor (207 aa).

The H-T-H motif DNA-binding region spans 28–48 (RAEIARRLGFKSPNAAEEHLK). Catalysis depends on for autocatalytic cleavage activity residues Ser-126 and Lys-163.

This sequence belongs to the peptidase S24 family. As to quaternary structure, homodimer.

The enzyme catalyses Hydrolysis of Ala-|-Gly bond in repressor LexA.. In terms of biological role, represses a number of genes involved in the response to DNA damage (SOS response), including recA and lexA. In the presence of single-stranded DNA, RecA interacts with LexA causing an autocatalytic cleavage which disrupts the DNA-binding part of LexA, leading to derepression of the SOS regulon and eventually DNA repair. This is LexA repressor from Marinomonas sp. (strain MWYL1).